The chain runs to 410 residues: Meiotic driver wtf18 (410 aa).

The disordered stretch occupies residues 1–39 (MKNKGYPLRSSMDELSTKNDNEIDLEKGPLPEYNSEDGS). A compositionally biased stretch (basic and acidic residues) spans 11 to 29 (SMDELSTKNDNEIDLEKGP). A run of 10 helical transmembrane segments spans residues 89 to 109 (LLIS…CVNP), 119 to 139 (AFFV…FCFF), 149 to 169 (CIKV…VFLA), 174 to 194 (VTAV…AKCI), 204 to 224 (CVKV…VGLY), 229 to 249 (DLVV…FGCV), 265 to 285 (CSIS…IWTL), 289 to 309 (LFGL…TKGL), 319 to 339 (ATGY…LFFY), and 353 to 373 (FIGN…GGIG).

This sequence belongs to the WTF family. Homomer. Forms protein aggregates. The two isoforms can interact with each other and with themselves. High sequence similarity is required for their interaction.

Its subcellular location is the spore membrane. The protein resides in the vacuole membrane. It localises to the ascus epiplasm. The protein localises to the cytoplasm. It is found in the endoplasmic reticulum membrane. Its function is as follows. Promotes unequal transmission of alleles from the parental zygote to progeny spores by acting as poison/antidote system where the poison and antidote proteins are produced from the same locus; the poison component is trans-acting and targets all spores within an ascus whereas the antidote component is spore-specific, leading to poisoning of all progeny that do not inherit the allele. Localizes isoform 2 to the vacuole thereby facilitating its degradation. In addition to suppressing isoform 2, also suppresses S.pombe strain 972 wtf13 isoform 2. Functionally, forms toxic aggregates that disrupt spore maturation. This Schizosaccharomyces pombe (Fission yeast) protein is Meiotic driver wtf18.